The following is a 442-amino-acid chain: Serine--tRNA ligase (442 aa).

Threonine 249–glutamate 251 is a binding site for L-serine. Position 280 to 282 (arginine 280 to glutamate 282) interacts with ATP. Glutamate 303 serves as a coordination point for L-serine. Glutamate 367–serine 370 contributes to the ATP binding site. Serine 402 contacts L-serine.

Belongs to the class-II aminoacyl-tRNA synthetase family. Type-1 seryl-tRNA synthetase subfamily. In terms of assembly, homodimer. The tRNA molecule binds across the dimer.

Its subcellular location is the cytoplasm. The catalysed reaction is tRNA(Ser) + L-serine + ATP = L-seryl-tRNA(Ser) + AMP + diphosphate + H(+). It catalyses the reaction tRNA(Sec) + L-serine + ATP = L-seryl-tRNA(Sec) + AMP + diphosphate + H(+). The protein operates within aminoacyl-tRNA biosynthesis; selenocysteinyl-tRNA(Sec) biosynthesis; L-seryl-tRNA(Sec) from L-serine and tRNA(Sec): step 1/1. Functionally, catalyzes the attachment of serine to tRNA(Ser). Is also able to aminoacylate tRNA(Sec) with serine, to form the misacylated tRNA L-seryl-tRNA(Sec), which will be further converted into selenocysteinyl-tRNA(Sec). In Acidovorax ebreus (strain TPSY) (Diaphorobacter sp. (strain TPSY)), this protein is Serine--tRNA ligase.